A 66-amino-acid polypeptide reads, in one-letter code: Large ribosomal subunit protein bL35 (66 aa).

The protein belongs to the bacterial ribosomal protein bL35 family.

This is Large ribosomal subunit protein bL35 from Moorella thermoacetica (strain ATCC 39073 / JCM 9320).